The primary structure comprises 2177 residues: Protein sidekick-2 (2177 aa).

The N-terminal stretch at 1–26 is a signal peptide; that stretch reads MKGLGVPAAALLWGGLSALLPPSLPA. At 27–1937 the chain is on the extracellular side; sequence DDVSPYFKTE…ANPFYEEWWF (1911 aa). 6 Ig-like C2-type domains span residues 31-113, 118-205, 220-299, 313-401, 407-496, and 501-590; these read PYFK…TEVQ, GSFE…QPIT, PTII…SSVP, PQFV…TYLA, PNIT…ADLV, and TRIT…AHLR. Residues cysteine 53 and cysteine 96 are joined by a disulfide bond. N-linked (GlcNAc...) asparagine glycans are attached at residues asparagine 198 and asparagine 228. 2 disulfide bridges follow: cysteine 242–cysteine 289 and cysteine 335–cysteine 385. Asparagine 408 is a glycosylation site (N-linked (GlcNAc...) asparagine). 2 cysteine pairs are disulfide-bonded: cysteine 428–cysteine 480 and cysteine 522–cysteine 574. N-linked (GlcNAc...) asparagine glycosylation is found at asparagine 582, asparagine 614, asparagine 709, asparagine 748, asparagine 809, asparagine 941, and asparagine 953. Fibronectin type-III domains follow at residues 597-693, 698-794, 799-898, 902-996, 1000-1099, 1104-1202, 1207-1304, 1305-1402, 1407-1504, 1509-1626, 1631-1727, 1731-1826, and 1829-1928; these read APES…LPEE, PPQN…TLQG, PPGN…THED, PVGH…VPPE, APTN…TLQA, APAN…TRES, GPSN…TLDD, VPGP…TEKR, PPSK…TLQA, APTI…VGEA, APQN…TQQA, APGS…TGPG, and APGP…AQKA. Asparagine 1107, asparagine 1210, asparagine 1261, asparagine 1346, asparagine 1462, asparagine 1580, asparagine 1593, asparagine 1675, asparagine 1694, asparagine 1746, and asparagine 1820 each carry an N-linked (GlcNAc...) asparagine glycan. The chain crosses the membrane as a helical span at residues 1938–1958; the sequence is LVVIALVGLIFILLLVFVLII. Residues 1959 to 2177 lie on the Cytoplasmic side of the membrane; the sequence is RGQSKKYAKK…APIGGFSSFV (219 aa). 2 disordered regions span residues 2044–2071 and 2103–2177; these read AESS…VDPA and QAYS…SSFV. Composition is skewed to polar residues over residues 2045–2063 and 2119–2130; these read ESSS…QGSD and PLSNSTSTQQGS. The span at 2142–2151 shows a compositional bias: pro residues; it reads PQTPGNPPSQ. The short motif at 2171 to 2177 is the PDZ-binding element; that stretch reads GGFSSFV.

Belongs to the sidekick family. As to quaternary structure, homodimer; mediates homophilic interactions to promote cell adhesion. In terms of tissue distribution, expressed by non-overlapping subsets of retinal neurons. SDK1, SDK2, DSCAM and DSCAML1 are expressed in non-overlapping subsets of interneurons and retinal ganglion cells (RGCs) that form synapses in distinct inner plexiform layer (IPL) sublaminae.

The protein resides in the cell membrane. It localises to the synapse. In terms of biological role, adhesion molecule that promotes lamina-specific synaptic connections in the retina. Expressed in specific subsets of interneurons and retinal ganglion cells (RGCs) and promotes synaptic connectivity via homophilic interactions. The protein is Protein sidekick-2 of Gallus gallus (Chicken).